The primary structure comprises 372 residues: MADS-box transcription factor pvg4 (372 aa).

Residues 1–61 (MGRKKISIAP…GRLHVFCSSD (61 aa)) form the MADS-box domain. Residues 81-187 (SHFSSSPVEE…HPPHPHFHNN (107 aa)) form a disordered region. Over residues 84-100 (SSSPVEESSTVSPETTT) the composition is skewed to low complexity. Over residues 114–145 (QDQPLSDSQLDTGDSPATSETTVQDYNPQVQS) the composition is skewed to polar residues. Basic residues predominate over residues 167 to 184 (QHHHPHTRPPHHPPHPHF).

It is found in the nucleus. Functionally, acts in transcription regulation. May bind to a MEF2-like typee II promoter sequence. The protein is MADS-box transcription factor pvg4 (pvg4) of Schizosaccharomyces pombe (strain 972 / ATCC 24843) (Fission yeast).